A 726-amino-acid polypeptide reads, in one-letter code: Probable cyclic nucleotide-gated ion channel 14 (726 aa).

The Cytoplasmic portion of the chain corresponds to 1-86 (MEFKRDNTVR…GDAVLQWNRV (86 aa)). Residues 87–107 (FLFWCLVALYVDPLFFFLSSV) traverse the membrane as a helical segment. The Extracellular segment spans residues 108–122 (KRIGRSSCMTTDLKL). A helical membrane pass occupies residues 123-143 (GIVITFFRTLADLFYVLHIVI). Over 144-177 (KFRTAYVSRTSRVFGRGELVKDPKLIARRYLRSD) the chain is Cytoplasmic. Residues 178-198 (FIVDLIACLPLPQIVSWFILP) form a helical membrane-spanning segment. At 199–211 (SIRSSHSDHTTNA) the chain is on the extracellular side. A helical membrane pass occupies residues 212–232 (LVLIVLVQYIPRLYLIFPLSA). Residues 233-252 (EIIKATGVVTTTAWAGAAYN) are Cytoplasmic-facing. The helical transmembrane segment at 253-273 (LLQYMLASHILGSAWYLLSIE) threads the bilayer. Residues 274–377 (RQATCWKAEC…LSTSTSVLET (104 aa)) lie on the Extracellular side of the membrane. A helical transmembrane segment spans residues 378-398 (MFAILVAIFGLVLFALLIGNM). Topologically, residues 399–726 (QTYLQSITVR…PDEPDFSVDD (328 aa)) are cytoplasmic. Residues 481–605 (LFAQ…SKKL) and E552 contribute to the a nucleoside 3',5'-cyclic phosphate site. The segment at 597–612 (FRRLHSKKLQHTFRYY) is calmodulin-binding. The IQ domain occupies 617–646 (RTWAACFVQVAWRRYKRKKLAKSLSLAESF). The interval 707–726 (KDVEIPMLPKPDEPDFSVDD) is disordered.

It belongs to the cyclic nucleotide-gated cation channel (TC 1.A.1.5) family. As to quaternary structure, homotetramer or heterotetramer.

Its subcellular location is the cell membrane. Probable cyclic nucleotide-gated ion channel. The chain is Probable cyclic nucleotide-gated ion channel 14 (CNGC14) from Arabidopsis thaliana (Mouse-ear cress).